The primary structure comprises 311 residues: Malate dehydrogenase (311 aa).

NAD(+) contacts are provided by residues 7–13 and Asp34; that span reads GAAGGIG. Substrate contacts are provided by Arg81 and Arg87. Residues Asn94 and 117 to 119 each bind NAD(+); that span reads ITN. Residues Asn119 and Arg153 each contribute to the substrate site. Catalysis depends on His177, which acts as the Proton acceptor. Position 227 (Met227) interacts with NAD(+).

The protein belongs to the LDH/MDH superfamily. MDH type 1 family. In terms of assembly, homodimer.

It carries out the reaction (S)-malate + NAD(+) = oxaloacetate + NADH + H(+). Catalyzes the reversible oxidation of malate to oxaloacetate. The polypeptide is Malate dehydrogenase (Shewanella sp. (strain ANA-3)).